A 217-amino-acid chain; its full sequence is Uracil-DNA glycosylase (217 aa).

Asp62 acts as the Proton acceptor in catalysis.

Belongs to the uracil-DNA glycosylase (UDG) superfamily. UNG family.

The protein resides in the cytoplasm. The enzyme catalyses Hydrolyzes single-stranded DNA or mismatched double-stranded DNA and polynucleotides, releasing free uracil.. Excises uracil residues from the DNA which can arise as a result of misincorporation of dUMP residues by DNA polymerase or due to deamination of cytosine. This chain is Uracil-DNA glycosylase, found in Streptococcus equi subsp. zooepidemicus (strain MGCS10565).